Reading from the N-terminus, the 155-residue chain is 3-dehydroquinate dehydratase (155 aa).

Tyrosine 32 functions as the Proton acceptor in the catalytic mechanism. Substrate-binding residues include asparagine 84, histidine 90, and aspartate 97. Histidine 110 serves as the catalytic Proton donor. Substrate contacts are provided by residues 111 to 112 (LS) and arginine 121.

Belongs to the type-II 3-dehydroquinase family. In terms of assembly, homododecamer.

It catalyses the reaction 3-dehydroquinate = 3-dehydroshikimate + H2O. The protein operates within metabolic intermediate biosynthesis; chorismate biosynthesis; chorismate from D-erythrose 4-phosphate and phosphoenolpyruvate: step 3/7. In terms of biological role, catalyzes a trans-dehydration via an enolate intermediate. This is 3-dehydroquinate dehydratase from Ralstonia pickettii (strain 12J).